The primary structure comprises 142 residues: Putative pre-16S rRNA nuclease (142 aa).

The protein belongs to the YqgF nuclease family.

The protein localises to the cytoplasm. Could be a nuclease involved in processing of the 5'-end of pre-16S rRNA. The chain is Putative pre-16S rRNA nuclease from Blochmanniella floridana.